The following is a 178-amino-acid chain: Large ribosomal subunit protein uL5 (178 aa).

This sequence belongs to the universal ribosomal protein uL5 family. In terms of assembly, part of the 50S ribosomal subunit; part of the 5S rRNA/L5/L18/L25 subcomplex. Contacts the 5S rRNA and the P site tRNA. Forms a bridge to the 30S subunit in the 70S ribosome.

Functionally, this is one of the proteins that bind and probably mediate the attachment of the 5S RNA into the large ribosomal subunit, where it forms part of the central protuberance. In the 70S ribosome it contacts protein S13 of the 30S subunit (bridge B1b), connecting the 2 subunits; this bridge is implicated in subunit movement. Contacts the P site tRNA; the 5S rRNA and some of its associated proteins might help stabilize positioning of ribosome-bound tRNAs. The polypeptide is Large ribosomal subunit protein uL5 (Aliivibrio fischeri (strain ATCC 700601 / ES114) (Vibrio fischeri)).